The chain runs to 136 residues: Large ribosomal subunit protein uL16 (136 aa).

This sequence belongs to the universal ribosomal protein uL16 family. Part of the 50S ribosomal subunit.

In terms of biological role, binds 23S rRNA and is also seen to make contacts with the A and possibly P site tRNAs. The protein is Large ribosomal subunit protein uL16 of Buchnera aphidicola subsp. Cinara cedri (strain Cc).